The following is a 210-amino-acid chain: Redox-sensing transcriptional repressor Rex (210 aa).

A DNA-binding region (H-T-H motif) is located at residues 16-55 (IYSRFLKRLDKKGITTVSSGDIAEGVGVSPAQVRKDLAYF). 90–95 (GAGNLG) contributes to the NAD(+) binding site.

This sequence belongs to the transcriptional regulatory Rex family. Homodimer.

Its subcellular location is the cytoplasm. Modulates transcription in response to changes in cellular NADH/NAD(+) redox state. The polypeptide is Redox-sensing transcriptional repressor Rex (Desulforamulus reducens (strain ATCC BAA-1160 / DSM 100696 / MI-1) (Desulfotomaculum reducens)).